We begin with the raw amino-acid sequence, 217 residues long: tRNA (guanine-N(7)-)-methyltransferase (217 aa).

S-adenosyl-L-methionine contacts are provided by Glu43, Asp68, Asn101, and Asn123. Residue Lys127 coordinates substrate. The segment at 129–134 (RHNKRR) is interaction with RNA. Residues Asp159 and 196–199 (TEYE) each bind substrate.

This sequence belongs to the class I-like SAM-binding methyltransferase superfamily. TrmB family.

The catalysed reaction is guanosine(46) in tRNA + S-adenosyl-L-methionine = N(7)-methylguanosine(46) in tRNA + S-adenosyl-L-homocysteine. It functions in the pathway tRNA modification; N(7)-methylguanine-tRNA biosynthesis. Functionally, catalyzes the formation of N(7)-methylguanine at position 46 (m7G46) in tRNA. In Clostridium botulinum (strain Langeland / NCTC 10281 / Type F), this protein is tRNA (guanine-N(7)-)-methyltransferase.